Here is a 59-residue protein sequence, read N- to C-terminus: UPF0434 protein LHK_01103 (59 aa).

The protein belongs to the UPF0434 family.

This chain is UPF0434 protein LHK_01103, found in Laribacter hongkongensis (strain HLHK9).